Here is a 439-residue protein sequence, read N- to C-terminus: Glutamine synthetase (439 aa).

One can recognise a GS beta-grasp domain in the interval glutamate 13–glycine 98. A GS catalytic domain is found at proline 105 to leucine 439. The Mg(2+) site is built by glutamate 128 and glutamate 130. Glutamate 180 is a binding site for ATP. Positions 185 and 192 each coordinate Mg(2+). L-glutamate is bound by residues asparagine 236–glycine 237 and glycine 237. Residue histidine 241 participates in Mg(2+) binding. ATP-binding positions include histidine 243 to serine 245 and serine 245. Residues arginine 294, glutamate 300, and arginine 312 each coordinate L-glutamate. Positions 312, 317, and 324 each coordinate ATP. Glutamate 329 contacts Mg(2+). Position 331 (arginine 331) interacts with L-glutamate.

It belongs to the glutamine synthetase family. As to quaternary structure, oligomer of 12 subunits arranged in the form of two hexagons. In its feedback-inhibited form, interacts with TnrA in order to block its DNA-binding activity. Requires Mg(2+) as cofactor.

Its subcellular location is the cytoplasm. It carries out the reaction L-glutamate + NH4(+) + ATP = L-glutamine + ADP + phosphate + H(+). Inhibited by glutamine. Functionally, glutamine synthetase (GS) is an unusual multitasking protein that functions as an enzyme, a transcription coregulator, and a chaperone in ammonium assimilation and in the regulation of genes involved in nitrogen metabolism. It catalyzes the ATP-dependent biosynthesis of glutamine from glutamate and ammonia. Feedback-inhibited GlnA also interacts with and regulates the activity of the transcriptional regulator TnrA. During nitrogen limitation, TnrA is in its DNA-binding active state and turns on the transcription of genes required for nitrogen assimilation. Under conditions of nitrogen excess, feedback-inhibited GlnA forms a stable complex with TnrA, which inhibits its DNA-binding activity. In contrast, feedback-inhibited GlnA acts as a chaperone to stabilize the DNA-binding activity of GlnR, which represses the transcription of nitrogen assimilation genes. The sequence is that of Glutamine synthetase from Thermotoga maritima (strain ATCC 43589 / DSM 3109 / JCM 10099 / NBRC 100826 / MSB8).